The sequence spans 180 residues: MSSKRLVRSTTVLCVRRDGKVVMAADGQVTLGEGVIKHNARKLRRLYQDKIIAGFAGSTADAFSLFGRFESKLEQYHGNLSRAAVELGKDWRTDKMLRQLEALLLVADKDQTFLISGQGDVIEPDTGIAAIGSGGSYATAAATALLEHSTLDARQIAEEAMKIAGKICIYTNDRVTIEEL.

Threonine 10 is a catalytic residue. Na(+) contacts are provided by glycine 165, cysteine 168, and threonine 171.

It belongs to the peptidase T1B family. HslV subfamily. In terms of assembly, a double ring-shaped homohexamer of HslV is capped on each side by a ring-shaped HslU homohexamer. The assembly of the HslU/HslV complex is dependent on binding of ATP.

Its subcellular location is the cytoplasm. The enzyme catalyses ATP-dependent cleavage of peptide bonds with broad specificity.. With respect to regulation, allosterically activated by HslU binding. Functionally, protease subunit of a proteasome-like degradation complex believed to be a general protein degrading machinery. The chain is ATP-dependent protease subunit HslV from Koribacter versatilis (strain Ellin345).